Consider the following 513-residue polypeptide: Catalase (513 aa).

The N-terminal stretch at 1-30 (MNPSLNAFRPGRLLVAASLTASLLSLSVQA) is a signal peptide. Active-site residues include histidine 81 and asparagine 153. Tyrosine 361 provides a ligand contact to heme. Polar residues predominate over residues 391–407 (DGALNAGHSTSGVNYQP). The tract at residues 391 to 413 (DGALNAGHSTSGVNYQPSRLDPR) is disordered.

It belongs to the catalase family. The cofactor is heme.

It localises to the periplasm. It catalyses the reaction 2 H2O2 = O2 + 2 H2O. Functionally, decomposes hydrogen peroxide into water and oxygen; serves to protect cells from the toxic effects of hydrogen peroxide. This is Catalase (katB) from Pseudomonas aeruginosa (strain ATCC 15692 / DSM 22644 / CIP 104116 / JCM 14847 / LMG 12228 / 1C / PRS 101 / PAO1).